A 296-amino-acid polypeptide reads, in one-letter code: MNQSEVEIVIITGMSGAGKSVAVRSFEDLGYYCIDNLPPVLLPKFIELIEGGIDKVTKVALVMDLRGQSFFDELFKAIDELNETPASRLKIQILYLDAKDSKLVQRYKETRRTHPLAKGGLPLEGIQKERNLLEEIKGRAQQIIDTTELKPLQLREKIMQRFAGNDRQAFAVHFVSFGFKYGIPIDADLVFDVRFLPNPHYVEDLRPKTGLQTEVSSYVLKWKETKQFVEKLTDLFDFMLPHYKREGKSQVVIGIGCTGGQHRSVTLAEYFCAHYEAKYDAYTSHRDINKRKANSR.

13-20 (GMSGAGKS) contributes to the ATP binding site. 64–67 (DLRG) lines the GTP pocket.

Belongs to the RapZ-like family.

Displays ATPase and GTPase activities. The protein is Nucleotide-binding protein ABC3036 of Shouchella clausii (strain KSM-K16) (Alkalihalobacillus clausii).